The following is a 781-amino-acid chain: Cation channel sperm-associated auxiliary subunit delta (781 aa).

Residues 1-20 (MLVLMLVVATTFRLCPLVKA) form the signal peptide. The Extracellular portion of the chain corresponds to 21–725 (RPLCRIRTLR…YGAFPLSIFP (705 aa)). 7 disulfide bridges follow: C24–C370, C60–C146, C145–C153, C388–C497, C511–C705, C526–C573, and C625–C655. 6 N-linked (GlcNAc...) asparagine glycosylation sites follow: N231, N294, N458, N473, N539, and N631. A helical membrane pass occupies residues 726–749 (PEITIVLLTAATLLSIWLAYMIPQ). The Cytoplasmic portion of the chain corresponds to 750–781 (LLHTEQGLEGNGFWVRLYQRCRKSCACLWGRC).

This sequence belongs to the CATSPERD family. In terms of assembly, component of the CatSper complex or CatSpermasome composed of the core pore-forming members CATSPER1, CATSPER2, CATSPER3 and CATSPER4 as well as auxiliary members CATSPERB, CATSPERG, CATSPERD, CATSPERE, CATSPERZ, C2CD6/CATSPERT, TMEM249, TMEM262 and EFCAB9. HSPA1 may be an additional auxiliary complex member. The core complex members CATSPER1, CATSPER2, CATSPER3 and CATSPER4 form a heterotetrameric channel. The auxiliary CATSPERB, CATSPERG, CATSPERD and CATSPERE subunits form a pavilion-like structure over the pore which stabilizes the complex through interactions with CATSPER4, CATSPER3, CATSPER1 and CATSPER2 respectively. TMEM262/CATSPERH interacts with CATSPERB, further stabilizing the complex. C2CD6/CATSPERT interacts at least with CATSPERD and is required for targeting the CatSper complex in the flagellar membrane.

The protein localises to the cell projection. The protein resides in the cilium. Its subcellular location is the flagellum membrane. Auxiliary component of the CatSper complex, a complex involved in sperm cell hyperactivation. Sperm cell hyperactivation is needed for sperm motility which is essential late in the preparation of sperm for fertilization. Required for CATSPER1 stability before intraflagellar transport and/or incorporation of the CatSper complex channel into the flagellar membrane. In Bos taurus (Bovine), this protein is Cation channel sperm-associated auxiliary subunit delta.